Here is a 381-residue protein sequence, read N- to C-terminus: Putative 8-amino-7-oxononanoate synthase (381 aa).

Residue Arg-20 coordinates substrate. A pyridoxal 5'-phosphate-binding site is contributed by 99–100 (GY). His-124 serves as a coordination point for substrate. Residues Ser-172, 197 to 200 (DDAH), and 228 to 231 (TMSK) each bind pyridoxal 5'-phosphate. Residue Lys-231 is modified to N6-(pyridoxal phosphate)lysine. Residue Thr-342 participates in substrate binding.

It belongs to the class-II pyridoxal-phosphate-dependent aminotransferase family. BioF subfamily. Homodimer. It depends on pyridoxal 5'-phosphate as a cofactor.

It catalyses the reaction 6-carboxyhexanoyl-[ACP] + L-alanine + H(+) = (8S)-8-amino-7-oxononanoate + holo-[ACP] + CO2. The protein operates within cofactor biosynthesis; biotin biosynthesis. Functionally, catalyzes the decarboxylative condensation of pimeloyl-[acyl-carrier protein] and L-alanine to produce 8-amino-7-oxononanoate (AON), [acyl-carrier protein], and carbon dioxide. The sequence is that of Putative 8-amino-7-oxononanoate synthase (bioF) from Methanococcus aeolicus (strain ATCC BAA-1280 / DSM 17508 / OCM 812 / Nankai-3).